Reading from the N-terminus, the 392-residue chain is Tryptophan synthase beta chain (392 aa).

K86 carries the post-translational modification N6-(pyridoxal phosphate)lysine.

It belongs to the TrpB family. As to quaternary structure, tetramer of two alpha and two beta chains. The cofactor is pyridoxal 5'-phosphate.

The catalysed reaction is (1S,2R)-1-C-(indol-3-yl)glycerol 3-phosphate + L-serine = D-glyceraldehyde 3-phosphate + L-tryptophan + H2O. It participates in amino-acid biosynthesis; L-tryptophan biosynthesis; L-tryptophan from chorismate: step 5/5. Its function is as follows. The beta subunit is responsible for the synthesis of L-tryptophan from indole and L-serine. The sequence is that of Tryptophan synthase beta chain (trpB) from Buchnera aphidicola subsp. Schlechtendalia chinensis.